A 157-amino-acid polypeptide reads, in one-letter code: Ribosomal RNA large subunit methyltransferase H (157 aa).

Residues Leu-75, Gly-106, and 125-130 (FSELTF) each bind S-adenosyl-L-methionine.

Belongs to the RNA methyltransferase RlmH family. As to quaternary structure, homodimer.

It is found in the cytoplasm. It catalyses the reaction pseudouridine(1915) in 23S rRNA + S-adenosyl-L-methionine = N(3)-methylpseudouridine(1915) in 23S rRNA + S-adenosyl-L-homocysteine + H(+). Functionally, specifically methylates the pseudouridine at position 1915 (m3Psi1915) in 23S rRNA. The chain is Ribosomal RNA large subunit methyltransferase H from Malacoplasma penetrans (strain HF-2) (Mycoplasma penetrans).